We begin with the raw amino-acid sequence, 206 residues long: MVREPASTLLPPTSPATPAPHRLLIGRRGMVPTGANVIWKIQSGLVRSSTWGEEGDMISLGLWGPGDLIGRPLSCLDPYELECLTAVEVVAVSDPALESHESLVRSLRYTERLLSITRLRRAEAKLASLLGWIGERFGQPGATGWEIDLRRIPLTHQVIAELSGSTRVTTTRLLGEFRQAGRIHRRDRALIVRYPETLYPPARLSA.

Residues 120 to 196 form the HTH crp-type domain; sequence RRAEAKLASL…DRALIVRYPE (77 aa). Residues 156–175 constitute a DNA-binding region (H-T-H motif); that stretch reads HQVIAELSGSTRVTTTRLLG.

It is found in the cytoplasm. Probably regulates the expression of genes from the sulfate permease complex. The sequence is that of Regulatory protein CysR (cysR) from Synechococcus elongatus (strain ATCC 33912 / PCC 7942 / FACHB-805) (Anacystis nidulans R2).